The sequence spans 424 residues: Zinc finger and BTB domain-containing protein 6 (424 aa).

In terms of domain architecture, BTB spans 33–97; sequence CDVSIYINDT…CYTGALEVKR (65 aa). S202 carries the phosphoserine modification. C2H2-type zinc fingers lie at residues 301 to 323, 326 to 348, 354 to 376, and 382 to 405; these read HQCPRCPRGFLHVENYLRHLKMH, FLCLQCGKTFTQKKNLNRHIRGH, FQCTVCLKTFTAKSTLQDHLNIH, and YKCHCCDMDFKHKSALKKHLTSLH. A disordered region spans residues 403–424; sequence SLHGRSSGEKLPRHDLERQNLL. Residues 408-424 show a composition bias toward basic and acidic residues; sequence SSGEKLPRHDLERQNLL.

It localises to the nucleus. Functionally, may be involved in transcriptional regulation. The protein is Zinc finger and BTB domain-containing protein 6 (ZBTB6) of Bos taurus (Bovine).